A 532-amino-acid polypeptide reads, in one-letter code: Glycerophosphocholine permease GIT4 (532 aa).

6 helical membrane-spanning segments follow: residues 55 to 75, 98 to 118, 126 to 146, 150 to 170, 201 to 221, and 229 to 249; these read LWPA…NAGI, NIGS…GYIS, GMLT…VASW, VQGF…AIGA, AMID…LWIF, and VWRL…FIRL. The N-linked (GlcNAc...) asparagine glycan is linked to N266. A helical membrane pass occupies residues 272–292; the sequence is WWLIIKFYWFRLTVVSLIWFI. Residue N314 is glycosylated (N-linked (GlcNAc...) asparagine). Helical transmembrane passes span 321 to 341, 349 to 369, and 375 to 395; these read WGWS…GAFI, LTLA…SACL, and HVAG…FGPG. N396 carries N-linked (GlcNAc...) asparagine glycosylation. 2 helical membrane passes run 416–436 and 450–470; these read GIAA…FPAI and VPFY…IFFV.

The protein belongs to the major facilitator superfamily. Sugar transporter (TC 2.A.1.1) family.

It is found in the cell membrane. It catalyses the reaction sn-glycerol 3-phosphocholine(out) = sn-glycerol 3-phosphocholine(in). Glycerophosphodiester transporter that mediates uptake of glycerophosphocholine (GroPCho) with GIT3. Does not possess detectable glycerophosphoinositol (GroPIns) transport activity. The expanded ability to utilize GroPIns and GroPCho results from the organism's pathogenic nature and its need to occupy a variety of environments within its host organism. This possibility is buttressed by the fact that GroPIns and GroPCho are present and abundant in human fluids. This chain is Glycerophosphocholine permease GIT4, found in Candida albicans (strain SC5314 / ATCC MYA-2876) (Yeast).